The following is a 429-amino-acid chain: Enolase (429 aa).

Gln163 lines the (2R)-2-phosphoglycerate pocket. Glu205 functions as the Proton donor in the catalytic mechanism. Positions 242, 287, and 314 each coordinate Mg(2+). 4 residues coordinate (2R)-2-phosphoglycerate: Lys339, Arg368, Ser369, and Lys390. Residue Lys339 is the Proton acceptor of the active site.

The protein belongs to the enolase family. It depends on Mg(2+) as a cofactor.

The protein localises to the cytoplasm. Its subcellular location is the secreted. It localises to the cell surface. It carries out the reaction (2R)-2-phosphoglycerate = phosphoenolpyruvate + H2O. It participates in carbohydrate degradation; glycolysis; pyruvate from D-glyceraldehyde 3-phosphate: step 4/5. Functionally, catalyzes the reversible conversion of 2-phosphoglycerate (2-PG) into phosphoenolpyruvate (PEP). It is essential for the degradation of carbohydrates via glycolysis. This is Enolase from Anaeromyxobacter dehalogenans (strain 2CP-1 / ATCC BAA-258).